The sequence spans 97 residues: MMTGLWLSWSLNIQKPMFPLRLAQAMPISPAFSFKREFIMAKQAKAKKAVEKKVGDSKRAGYKRGSNSRINQTVEKIMRRARAVLRDDASRFGKQKA.

This is an uncharacterized protein from Escherichia coli (Bacteriophage T4).